The sequence spans 655 residues: p-hydroxybenzoic acid efflux pump subunit AaeB (655 aa).

The next 11 membrane-spanning stretches (helical) occupy residues 13–33 (FAVK…HFQL), 38–58 (WAVL…GGEP), 69–89 (LRII…ISMI), 93–113 (LLMI…SSLV), 121–141 (WGLS…EPLL), 152–172 (EIVI…PRSI), 370–390 (LFWL…IAVV), 407–427 (FIYG…VIIP), 431–451 (QSML…GIEV), 459–479 (MGAL…TFHF), and 482–502 (FLDS…VILL).

This sequence belongs to the aromatic acid exporter ArAE (TC 2.A.85) family.

It localises to the cell inner membrane. In terms of biological role, forms an efflux pump with AaeA. Could function as a metabolic relief valve, allowing to eliminate certain compounds when they accumulate to high levels in the cell. This is p-hydroxybenzoic acid efflux pump subunit AaeB from Salmonella arizonae (strain ATCC BAA-731 / CDC346-86 / RSK2980).